Reading from the N-terminus, the 332-residue chain is rRNA biogenesis protein rrp-36 (332 aa).

Disordered stretches follow at residues 1-91 (MPAV…ASQL), 104-196 (GALK…SGKS), 243-262 (SMES…ELLS), and 312-332 (KKIA…AEDR). Composition is skewed to acidic residues over residues 27–45 (EPDS…EEEG), 53–77 (DTEE…DSDA), and 117–127 (EDGSDDDEEKE). Composition is skewed to basic and acidic residues over residues 128 to 142 (EPNW…MKAK) and 165 to 183 (RRRD…RDPR). Positions 212–274 (DYQEDEMKQL…KKKEKELIKQ (63 aa)) form a coiled coil. Residues 315–332 (AGKEKKALPLARRTAEDR) show a composition bias toward basic and acidic residues.

The protein belongs to the RRP36 family. As to quaternary structure, associates with 90S and pre-40S pre-ribosomal particles.

The protein resides in the nucleus. It localises to the nucleolus. Functionally, component of the 90S pre-ribosome involved in the maturation of rRNAs. Required for early cleavages of the pre-RNAs in the 40S ribosomal subunit maturation pathway. The polypeptide is rRNA biogenesis protein rrp-36 (rrp-36) (Neurospora crassa (strain ATCC 24698 / 74-OR23-1A / CBS 708.71 / DSM 1257 / FGSC 987)).